Here is a 160-residue protein sequence, read N- to C-terminus: SsrA-binding protein (160 aa).

This sequence belongs to the SmpB family.

The protein resides in the cytoplasm. In terms of biological role, required for rescue of stalled ribosomes mediated by trans-translation. Binds to transfer-messenger RNA (tmRNA), required for stable association of tmRNA with ribosomes. tmRNA and SmpB together mimic tRNA shape, replacing the anticodon stem-loop with SmpB. tmRNA is encoded by the ssrA gene; the 2 termini fold to resemble tRNA(Ala) and it encodes a 'tag peptide', a short internal open reading frame. During trans-translation Ala-aminoacylated tmRNA acts like a tRNA, entering the A-site of stalled ribosomes, displacing the stalled mRNA. The ribosome then switches to translate the ORF on the tmRNA; the nascent peptide is terminated with the 'tag peptide' encoded by the tmRNA and targeted for degradation. The ribosome is freed to recommence translation, which seems to be the essential function of trans-translation. In Sodalis glossinidius (strain morsitans), this protein is SsrA-binding protein.